A 475-amino-acid chain; its full sequence is MLRWLRGFVLPTAACQGAEPPTRYETLFQALDRNGDGVVDIRELQEGLKSLGIPLGQDAEEKIFTTGDVNKDGKLDFEEFMKYLKDHEKKMKLAFKSLDKNNDGKIEASEIVQSLQTLGLTISEQQAELILQSIDADGTMTVDWNEWRDYFLFNPVADIEEIIRFWKHSTGIDIGDSLTIPDEFTEEERKSGQWWRQLLAGGIAGAVSRTSTAPLDRLKVMMQVHGSKSMNIFGGFRQMIKEGGVRSLWRGNGTNVIKIAPETAVKFWVYEQYKKLLTEEGQKIGTFERFISGSMAGATAQTFIYPMEVMKTRLAVGKTGQYSGIYDCAKKILKYEGFGAFYKGYVPNLLGIIPYAGIDLAVYELLKSHWLDNFAKDSVNPGVLVLLGCGALSSTCGQLASYPLALVRTRMQAQAMLEGAPQLNMVGLFRRIISKEGLPGLYRGITPNFMKVLPAVGISYVVYENMKQTLGVTQK.

The interval 1–173 (MLRWLRGFVL…RFWKHSTGID (173 aa)) is regulatory N-terminal domain. Over 1 to 197 (MLRWLRGFVL…ERKSGQWWRQ (197 aa)) the chain is Mitochondrial intermembrane. EF-hand domains are found at residues 19–54 (EPPT…LGIP), 55–88 (LGQD…KDHE), 86–121 (DHEK…LGLT), and 122–157 (ISEQ…NPVA). Ca(2+) contacts are provided by Asp32, Asn34, Asp36, Val38, Glu43, Asp68, Asn70, Asp72, Lys74, Glu79, Asp99, Asn101, Asp103, Lys105, Glu110, Asp135, Asp137, Thr139, Thr141, and Glu146. The interval 159-168 (IEEIIRFWKH) is linker region. The segment at 174-475 (IGDSLTIPDE…MKQTLGVTQK (302 aa)) is C-terminal transmembrane transporter domain. Solcar repeat units follow at residues 192 to 276 (GQWW…YKKL), 284 to 369 (IGTF…LKSH), and 381 to 469 (PGVL…MKQT). Residues 198 to 215 (LLAGGIAGAVSRTSTAPL) form a helical membrane-spanning segment. The Mitochondrial matrix portion of the chain corresponds to 216 to 250 (DRLKVMMQVHGSKSMNIFGGFRQMIKEGGVRSLWR). The chain crosses the membrane as a helical span at residues 251–270 (GNGTNVIKIAPETAVKFWVY). Residues 271–293 (EQYKKLLTEEGQKIGTFERFISG) lie on the Mitochondrial intermembrane side of the membrane. Residues 294–307 (SMAGATAQTFIYPM) traverse the membrane as a helical segment. The Mitochondrial matrix segment spans residues 308-343 (EVMKTRLAVGKTGQYSGIYDCAKKILKYEGFGAFYK). Residue Lys318 is modified to N6-acetyllysine; alternate. An N6-succinyllysine; alternate modification is found at Lys318. Lys334 is subject to N6-acetyllysine. The chain crosses the membrane as a helical span at residues 344–363 (GYVPNLLGIIPYAGIDLAVY). At 364–386 (ELLKSHWLDNFAKDSVNPGVLVL) the chain is on the mitochondrial intermembrane side. A helical membrane pass occupies residues 387 to 404 (LGCGALSSTCGQLASYPL). At 405–443 (ALVRTRMQAQAMLEGAPQLNMVGLFRRIISKEGLPGLYR) the chain is on the mitochondrial matrix side. Lys435 carries the N6-acetyllysine; alternate modification. Lys435 is subject to N6-succinyllysine; alternate. A helical membrane pass occupies residues 444–463 (GITPNFMKVLPAVGISYVVY). Over 464-475 (ENMKQTLGVTQK) the chain is Mitochondrial intermembrane.

This sequence belongs to the mitochondrial carrier (TC 2.A.29) family. Monomer. As to expression, mainly expressed in colon. Also expressed in the small intestine proximal to the ileum. Weakly expressed in kidney but not in the liver.

It localises to the mitochondrion inner membrane. The protein resides in the peroxisome membrane. It catalyses the reaction Mg(2+)(out) + phosphate(in) + ATP(out) = Mg(2+)(in) + phosphate(out) + ATP(in). The enzyme catalyses ADP(out) + phosphate(in) + H(+)(out) = ADP(in) + phosphate(out) + H(+)(in). The catalysed reaction is AMP(out) + phosphate(in) = AMP(in) + phosphate(out). It carries out the reaction phosphate(in) + ATP(out) + 2 H(+)(out) = phosphate(out) + ATP(in) + 2 H(+)(in). It catalyses the reaction dADP(in) + ADP(out) = dADP(out) + ADP(in). The enzyme catalyses Mg(2+)(in) + ADP(out) + ATP(in) + H(+)(out) = Mg(2+)(out) + ADP(in) + ATP(out) + H(+)(in). The catalysed reaction is ADP(out) + diphosphate(in) = ADP(in) + diphosphate(out). It carries out the reaction dAMP(in) + ADP(out) + H(+)(out) = dAMP(out) + ADP(in) + H(+)(in). It catalyses the reaction 3'-AMP(in) + ADP(out) + H(+)(out) = 3'-AMP(out) + ADP(in) + H(+)(in). The enzyme catalyses dAMP(out) + phosphate(in) = dAMP(in) + phosphate(out). The catalysed reaction is 3'-AMP(out) + phosphate(in) = 3'-AMP(in) + phosphate(out). It carries out the reaction dADP(out) + phosphate(in) + H(+)(out) = dADP(in) + phosphate(out) + H(+)(in). With respect to regulation, activated by an increase in cytosolic calcium levels that induce a conformational change of the N-terminal regulatory domain, uncapping the channel and allowing transport. Inhibited by bathophenanthroline, mersalyl, p-hydroxymercuribenzoate, bromcresol purple and tannic acid. Its function is as follows. Electroneutral antiporter that mediates the transport of adenyl nucleotides through the inner mitochondrial membrane. Originally identified as an ATP-magnesium/inorganic phosphate antiporter, it also acts as a broad specificity adenyl nucleotide antiporter. By regulating the mitochondrial matrix adenyl nucleotide pool could adapt to changing cellular energetic demands and indirectly regulate adenyl nucleotide-dependent metabolic pathways. In vitro, a low activity is also observed with guanyl and pyrimidine nucleotides. May play a role in protecting cells against oxidative stress-induced cell death, by buffering calcium levels in the mitochondrial matrix through the formation of calcium-phosphate precipitates. The polypeptide is Mitochondrial adenyl nucleotide antiporter SLC25A24 (SLC25A24) (Oryctolagus cuniculus (Rabbit)).